The chain runs to 671 residues: tRNA(Met) cytidine acetyltransferase TmcA (671 aa).

ATP contacts are provided by residues Gln-180, 202–211 (GRGKSALAGQ), and Arg-319. The N-acetyltransferase domain occupies 349-531 (IRFSAFTQAL…SGCYTAMALL (183 aa)). Acetyl-CoA-binding positions include 461-463 (IAV), 468-474 (QREGIGQ), Glu-499, and Arg-506.

It belongs to the RNA cytidine acetyltransferase family. TmcA subfamily.

Its subcellular location is the cytoplasm. It catalyses the reaction cytidine(34) in elongator tRNA(Met) + acetyl-CoA + ATP + H2O = N(4)-acetylcytidine(34) in elongator tRNA(Met) + ADP + phosphate + CoA + H(+). Its function is as follows. Catalyzes the formation of N(4)-acetylcytidine (ac(4)C) at the wobble position of tRNA(Met), by using acetyl-CoA as an acetyl donor and ATP (or GTP). This is tRNA(Met) cytidine acetyltransferase TmcA from Citrobacter koseri (strain ATCC BAA-895 / CDC 4225-83 / SGSC4696).